The following is a 788-amino-acid chain: Spastin (788 aa).

The interval 1 to 105 (MVRTKNQSSS…PRSAGGPSSV (105 aa)) is disordered. The Cytoplasmic segment spans residues 1–116 (MVRTKNQSSS…KQNLYVVSFP (116 aa)). The interval 1-227 (MVRTKNQSSS…NRSGSGYSPG (227 aa)) is required for localization to punctate cytoplasmic foci. Low complexity-rich tracts occupy residues 8-48 (SSSS…SSHR) and 57-75 (ATNV…SSPD). An intramembrane region (helical) is located at residues 117–137 (IIFLFNVLRSLIYQLFCIFRY). Over 138–788 (LYGASTKVIY…WSSDYGDITI (651 aa)) the chain is Cytoplasmic. Residues 227–788 (GPGDPLLAKQ…WSSDYGDITI (562 aa)) form a sufficient for interaction with microtubules and microtubule severing region. An MIT domain is found at 240-315 (HRRAFEYISK…SMARDRLHFL (76 aa)). Residues 330-353 (KEEQKPNPSREQHQKPQKAREAAD) are compositionally biased toward basic and acidic residues. The segment at 330–484 (KEEQKPNPSR…SGSGSGASTP (155 aa)) is disordered. The segment covering 380–400 (LTTPRISATATTPTSSSSLAS) has biased composition (low complexity). Composition is skewed to polar residues over residues 419–433 (NKSQ…SKTS) and 453–469 (QFSS…RTPI). The required for interaction with microtubules stretch occupies residues 471–485 (NNGASGSGSGASTPV). An ATP-binding site is contributed by 553–560 (GPPGNGKT).

Belongs to the AAA ATPase family. Spastin subfamily. In terms of assembly, homohexamer. The homohexamer is stabilized by ATP-binding. The homohexamer may adopt a ring conformation through which microtubules pass prior to being severed. Interacts with microtubules. Interacts with atl; may be involved in microtubule dynamics.

It localises to the membrane. The protein localises to the cytoplasm. Its subcellular location is the cytoskeleton. The protein resides in the microtubule organizing center. It is found in the centrosome. It localises to the chromosome. The protein localises to the lipid droplet. The catalysed reaction is n ATP + n H2O + a microtubule = n ADP + n phosphate + (n+1) alpha/beta tubulin heterodimers.. In terms of biological role, ATP-dependent microtubule severing protein. Stimulates microtubule minus-end depolymerization and poleward microtubule flux in the mitotic spindle. Regulates microtubule stability in the neuromuscular junction synapse. Involved in lipid metabolism by regulating the size and distribution of lipid droplets. Involved in axon regeneration by regulating microtubule severing. This Drosophila pseudoobscura pseudoobscura (Fruit fly) protein is Spastin.